Reading from the N-terminus, the 152-residue chain is Deoxyuridine 5'-triphosphate nucleotidohydrolase (152 aa).

Substrate-binding positions include 71 to 73 (RSG), Asn-84, 88 to 90 (LID), and Met-98.

The protein belongs to the dUTPase family. Mg(2+) is required as a cofactor.

The enzyme catalyses dUTP + H2O = dUMP + diphosphate + H(+). The protein operates within pyrimidine metabolism; dUMP biosynthesis; dUMP from dCTP (dUTP route): step 2/2. Functionally, this enzyme is involved in nucleotide metabolism: it produces dUMP, the immediate precursor of thymidine nucleotides and it decreases the intracellular concentration of dUTP so that uracil cannot be incorporated into DNA. In Shigella flexneri, this protein is Deoxyuridine 5'-triphosphate nucleotidohydrolase.